Reading from the N-terminus, the 92-residue chain is Small ribosomal subunit protein uS19 (92 aa).

This sequence belongs to the universal ribosomal protein uS19 family.

In terms of biological role, protein S19 forms a complex with S13 that binds strongly to the 16S ribosomal RNA. The polypeptide is Small ribosomal subunit protein uS19 (Ruegeria pomeroyi (strain ATCC 700808 / DSM 15171 / DSS-3) (Silicibacter pomeroyi)).